A 141-amino-acid chain; its full sequence is Large ribosomal subunit protein uL11 (141 aa).

This sequence belongs to the universal ribosomal protein uL11 family. As to quaternary structure, part of the ribosomal stalk of the 50S ribosomal subunit. Interacts with L10 and the large rRNA to form the base of the stalk. L10 forms an elongated spine to which L12 dimers bind in a sequential fashion forming a multimeric L10(L12)X complex. In terms of processing, one or more lysine residues are methylated.

Forms part of the ribosomal stalk which helps the ribosome interact with GTP-bound translation factors. The chain is Large ribosomal subunit protein uL11 from Limosilactobacillus fermentum (strain NBRC 3956 / LMG 18251) (Lactobacillus fermentum).